The sequence spans 264 residues: 3-methyl-2-oxobutanoate hydroxymethyltransferase (264 aa).

Mg(2+) contacts are provided by D45 and D84. 3-methyl-2-oxobutanoate contacts are provided by residues 45-46, D84, and K112; that span reads DS. E114 serves as a coordination point for Mg(2+). E181 (proton acceptor) is an active-site residue.

Belongs to the PanB family. As to quaternary structure, homodecamer; pentamer of dimers. Mg(2+) is required as a cofactor.

The protein resides in the cytoplasm. The enzyme catalyses 3-methyl-2-oxobutanoate + (6R)-5,10-methylene-5,6,7,8-tetrahydrofolate + H2O = 2-dehydropantoate + (6S)-5,6,7,8-tetrahydrofolate. Its pathway is cofactor biosynthesis; (R)-pantothenate biosynthesis; (R)-pantoate from 3-methyl-2-oxobutanoate: step 1/2. Its function is as follows. Catalyzes the reversible reaction in which hydroxymethyl group from 5,10-methylenetetrahydrofolate is transferred onto alpha-ketoisovalerate to form ketopantoate. This is 3-methyl-2-oxobutanoate hydroxymethyltransferase from Shewanella sp. (strain ANA-3).